We begin with the raw amino-acid sequence, 550 residues long: Protein UshA (550 aa).

The first 25 residues, 1 to 25 (MKFLKRGVALALLAAFALTTQPAQA), serve as a signal peptide directing secretion. Zn(2+) is bound by residues D41, H43, D84, N116, H217, H252, and Q254. A disulfide bridge connects residues C258 and C275. Substrate is bound by residues F429 and 498-504 (FNATGGD).

The protein belongs to the 5'-nucleotidase family. In terms of assembly, monomer. Zn(2+) is required as a cofactor.

The protein localises to the periplasm. It carries out the reaction UDP-sugar + H2O = UMP + alpha-D-aldose 1-phosphate.. The enzyme catalyses a ribonucleoside 5'-phosphate + H2O = a ribonucleoside + phosphate. Functionally, degradation of external UDP-glucose to uridine monophosphate and glucose-1-phosphate, which can then be used by the cell. This is Protein UshA (ushA) from Salmonella pullorum.